A 234-amino-acid polypeptide reads, in one-letter code: uncharacterized protein (234 aa).

6 consecutive transmembrane segments (helical) span residues 5-23 (LFYI…LWSF), 38-60 (IPTA…GFWV), 73-92 (AHIQ…AHGW), 127-149 (AITL…YIWL), 170-192 (GVAI…TVIS), and 197-217 (TQAG…ALAF).

Its subcellular location is the cell membrane. This is an uncharacterized protein from Archaeoglobus fulgidus (strain ATCC 49558 / DSM 4304 / JCM 9628 / NBRC 100126 / VC-16).